A 375-amino-acid chain; its full sequence is Alcohol dehydrogenase class-3 chain H (375 aa).

Alanine 1 carries the post-translational modification N-acetylalanine. Residues cysteine 46, histidine 68, cysteine 98, cysteine 101, cysteine 104, cysteine 112, and cysteine 175 each coordinate Zn(2+).

Belongs to the zinc-containing alcohol dehydrogenase family. Class-III subfamily. In terms of assembly, homodimer or heterodimer with L chain. Zn(2+) serves as cofactor.

Its subcellular location is the cytoplasm. The enzyme catalyses a primary alcohol + NAD(+) = an aldehyde + NADH + H(+). The catalysed reaction is a secondary alcohol + NAD(+) = a ketone + NADH + H(+). It carries out the reaction S-(hydroxymethyl)glutathione + NADP(+) = S-formylglutathione + NADPH + H(+). It catalyses the reaction S-(hydroxymethyl)glutathione + NAD(+) = S-formylglutathione + NADH + H(+). Functionally, class-III ADH is remarkably ineffective in oxidizing ethanol, but it readily catalyzes the oxidation of long-chain primary alcohols and the oxidation of S-(hydroxymethyl) glutathione. This is Alcohol dehydrogenase class-3 chain H from Gadus morhua (Atlantic cod).